The sequence spans 308 residues: Insoluble matrix shell protein 4 (308 aa).

Disordered stretches follow at residues 1–21 (HGNG…GNGY), 47–104 (NTNS…PNAV), and 134–250 (YDSN…NTNS). Over residues 47–99 (NTNSLNGNNNGNSNNNGNGNNNGNSNNNGNGNNNGNTNNGNSYDSNTNDDSNS) the composition is skewed to low complexity.

As to expression, component of the acid-insoluble organic matrix of the calcified shell.

It is found in the secreted. This chain is Insoluble matrix shell protein 4, found in Ruditapes philippinarum (Japanese carpet shell).